The following is a 364-amino-acid chain: Histidinol-phosphate aminotransferase 1 (364 aa).

The residue at position 211 (Lys-211) is an N6-(pyridoxal phosphate)lysine.

Belongs to the class-II pyridoxal-phosphate-dependent aminotransferase family. Histidinol-phosphate aminotransferase subfamily. In terms of assembly, homodimer. The cofactor is pyridoxal 5'-phosphate.

The catalysed reaction is L-histidinol phosphate + 2-oxoglutarate = 3-(imidazol-4-yl)-2-oxopropyl phosphate + L-glutamate. It functions in the pathway amino-acid biosynthesis; L-histidine biosynthesis; L-histidine from 5-phospho-alpha-D-ribose 1-diphosphate: step 7/9. This chain is Histidinol-phosphate aminotransferase 1, found in Legionella pneumophila (strain Lens).